The sequence spans 298 residues: tRNA-cytidine(32) 2-sulfurtransferase (298 aa).

The short motif at 48–53 (SGGKDS) is the PP-loop motif element. [4Fe-4S] cluster contacts are provided by Cys-123, Cys-126, and Cys-214.

Belongs to the TtcA family. In terms of assembly, homodimer. Requires Mg(2+) as cofactor. [4Fe-4S] cluster serves as cofactor.

The protein resides in the cytoplasm. It catalyses the reaction cytidine(32) in tRNA + S-sulfanyl-L-cysteinyl-[cysteine desulfurase] + AH2 + ATP = 2-thiocytidine(32) in tRNA + L-cysteinyl-[cysteine desulfurase] + A + AMP + diphosphate + H(+). It functions in the pathway tRNA modification. Functionally, catalyzes the ATP-dependent 2-thiolation of cytidine in position 32 of tRNA, to form 2-thiocytidine (s(2)C32). The sulfur atoms are provided by the cysteine/cysteine desulfurase (IscS) system. This chain is tRNA-cytidine(32) 2-sulfurtransferase, found in Nitrosospira multiformis (strain ATCC 25196 / NCIMB 11849 / C 71).